A 640-amino-acid polypeptide reads, in one-letter code: Tyrosine--tRNA ligase, mitochondrial (640 aa).

Residue Tyr100 coordinates L-tyrosine. Asp104 lines the ATP pocket. The 'HIGH' region motif lies at 105–114 (PTAPSLHIGH). Asp144, Tyr248, Gln252, Asp255, and Gln274 together coordinate L-tyrosine. The 'KMSKS' region signature appears at 322–326 (KFGKS). Lys325 contacts ATP.

This sequence belongs to the class-I aminoacyl-tRNA synthetase family.

The protein localises to the mitochondrion matrix. The catalysed reaction is tRNA(Tyr) + L-tyrosine + ATP = L-tyrosyl-tRNA(Tyr) + AMP + diphosphate + H(+). Has both an aminoacyl-tRNA synthetase activity and is involved in the splicing of group I introns. The protein is Tyrosine--tRNA ligase, mitochondrial (YTS1) of Podospora anserina (Pleurage anserina).